The primary structure comprises 152 residues: Small ribosomal subunit protein uS15 (152 aa).

Positions 1–20 (MNKRRANGSSHSTRPVRTGS) are disordered.

The protein belongs to the universal ribosomal protein uS15 family. As to quaternary structure, part of the 30S ribosomal subunit.

The sequence is that of Small ribosomal subunit protein uS15 from Metallosphaera sedula (strain ATCC 51363 / DSM 5348 / JCM 9185 / NBRC 15509 / TH2).